The chain runs to 245 residues: MYPVDLHMHTVASTHAYSTLSDYIAQAKQKGIKLFAITDHGPDMEDAPHHWHFINMRIWPRVVDGVGILRGIEANIKNVDGEIDCSGKMFDSLDLIIAGFHEPVFAPHDKATNTQAMIATIASGNVHIISHPGNPKYEIDVKAVAEAAAKHQVALEINNSSFLHSRKGSEDNCRAVAAAVRDAGGWVALGSDSHAAFTMGEFEECLKILDAVDFPPERILNVSPRRLLNFLESRGMAPIAEFADL.

Zn(2+)-binding residues include His-7, His-9, His-15, His-40, Glu-73, His-101, His-131, Asp-192, and His-194.

Belongs to the PHP family. As to quaternary structure, homotrimer. Zn(2+) is required as a cofactor.

This chain is Probable phosphatase YcdX, found in Escherichia coli O139:H28 (strain E24377A / ETEC).